Reading from the N-terminus, the 222-residue chain is uncharacterized protein (222 aa).

Residues 7–26 form a helical membrane-spanning segment; it reads ICLVSLICISGIYFGYQYYQ. Residues 139–222 enclose the SPOR domain; the sequence is CRSNAGYKVQ…AYNKQSCVLK (84 aa).

The protein localises to the membrane. This is an uncharacterized protein from Rickettsia prowazekii (strain Madrid E).